We begin with the raw amino-acid sequence, 514 residues long: Probable lysine--tRNA ligase, cytoplasmic (514 aa).

The protein belongs to the class-II aminoacyl-tRNA synthetase family. In terms of assembly, homodimer.

The protein resides in the cytoplasm. The catalysed reaction is tRNA(Lys) + L-lysine + ATP = L-lysyl-tRNA(Lys) + AMP + diphosphate. This is Probable lysine--tRNA ligase, cytoplasmic from Vairimorpha ceranae (strain BRL01) (Microsporidian parasite).